Reading from the N-terminus, the 74-residue chain is Translation initiation factor IF-1 (74 aa).

The region spanning Met-1–Arg-72 is the S1-like domain.

This sequence belongs to the IF-1 family. In terms of assembly, component of the 30S ribosomal translation pre-initiation complex which assembles on the 30S ribosome in the order IF-2 and IF-3, IF-1 and N-formylmethionyl-tRNA(fMet); mRNA recruitment can occur at any time during PIC assembly.

Its subcellular location is the cytoplasm. In terms of biological role, one of the essential components for the initiation of protein synthesis. Stabilizes the binding of IF-2 and IF-3 on the 30S subunit to which N-formylmethionyl-tRNA(fMet) subsequently binds. Helps modulate mRNA selection, yielding the 30S pre-initiation complex (PIC). Upon addition of the 50S ribosomal subunit IF-1, IF-2 and IF-3 are released leaving the mature 70S translation initiation complex. The sequence is that of Translation initiation factor IF-1 from Ureaplasma parvum serovar 3 (strain ATCC 700970).